The sequence spans 113 residues: FK506-binding protein 1B (113 aa).

A PPIase FKBP-type domain is found at 19–113 (GQTVVIEYTG…IFDVYLKGLQ (95 aa)).

Belongs to the FKBP-type PPIase family. FKBP1 subfamily.

Its subcellular location is the cytoplasm. It catalyses the reaction [protein]-peptidylproline (omega=180) = [protein]-peptidylproline (omega=0). Its activity is regulated as follows. Inhibited by both FK506 and rapamycin. In terms of biological role, PPIases accelerate the folding of proteins. It catalyzes the cis-trans isomerization of proline imidic peptide bonds in oligopeptides. In Neurospora crassa (strain ATCC 24698 / 74-OR23-1A / CBS 708.71 / DSM 1257 / FGSC 987), this protein is FK506-binding protein 1B (fkr-3).